We begin with the raw amino-acid sequence, 1134 residues long: Centrosomal protein of 131 kDa (1134 aa).

5 disordered regions span residues 111-131, 168-208, 286-306, 425-455, and 492-528; these read NSSE…EEGE, DLPG…PLTL, ESSK…APSS, VGKK…TINP, and DQKQ…EDSR. Positions 180–196 are enriched in basic and acidic residues; sequence MHADLDSSDCDNDKQEV. The span at 494-504 shows a compositional bias: basic and acidic residues; the sequence is KQYDGKHKPGL. A compositionally biased stretch (polar residues) spans 513–522; it reads NDTASQLSLK. Residues 732-1131 adopt a coiled-coil conformation; the sequence is LESQNQAWEH…AVIRQQRKDY (400 aa).

It belongs to the CEP131 family. Expressed in chordotonal (Ch) neuronal precursors. Expressed in ciliated cells, like sensory neurons and spermatids.

It localises to the cytoplasm. It is found in the cytoskeleton. The protein localises to the microtubule organizing center. The protein resides in the centrosome. Its subcellular location is the cilium basal body. It localises to the centriole. Its function is as follows. Cilium-specific protein with a role in cilium/flagellum formation. May be involved in transport of components into the growing cilium. In germ cells and sensory neurons, plays a role with Cby in the building of the transition zone necessary for the formation of the ciliary cap and for the correct elongation of the axoneme. The sequence is that of Centrosomal protein of 131 kDa from Drosophila melanogaster (Fruit fly).